A 475-amino-acid chain; its full sequence is Aspartyl/glutamyl-tRNA(Asn/Gln) amidotransferase subunit B (475 aa).

Belongs to the GatB/GatE family. GatB subfamily. As to quaternary structure, heterotrimer of A, B and C subunits.

It catalyses the reaction L-glutamyl-tRNA(Gln) + L-glutamine + ATP + H2O = L-glutaminyl-tRNA(Gln) + L-glutamate + ADP + phosphate + H(+). The enzyme catalyses L-aspartyl-tRNA(Asn) + L-glutamine + ATP + H2O = L-asparaginyl-tRNA(Asn) + L-glutamate + ADP + phosphate + 2 H(+). Allows the formation of correctly charged Asn-tRNA(Asn) or Gln-tRNA(Gln) through the transamidation of misacylated Asp-tRNA(Asn) or Glu-tRNA(Gln) in organisms which lack either or both of asparaginyl-tRNA or glutaminyl-tRNA synthetases. The reaction takes place in the presence of glutamine and ATP through an activated phospho-Asp-tRNA(Asn) or phospho-Glu-tRNA(Gln). This Chlorobium phaeobacteroides (strain BS1) protein is Aspartyl/glutamyl-tRNA(Asn/Gln) amidotransferase subunit B.